Here is a 235-residue protein sequence, read N- to C-terminus: 5'-methylthioadenosine/S-adenosylhomocysteine nucleosidase (235 aa).

Glu12 acts as the Proton acceptor in catalysis. Substrate-binding positions include Gly78, Met153, and 174-175 (ME). The Proton donor role is filled by Asp198.

This sequence belongs to the PNP/UDP phosphorylase family. MtnN subfamily.

It carries out the reaction S-adenosyl-L-homocysteine + H2O = S-(5-deoxy-D-ribos-5-yl)-L-homocysteine + adenine. The enzyme catalyses S-methyl-5'-thioadenosine + H2O = 5-(methylsulfanyl)-D-ribose + adenine. It catalyses the reaction 5'-deoxyadenosine + H2O = 5-deoxy-D-ribose + adenine. It functions in the pathway amino-acid biosynthesis; L-methionine biosynthesis via salvage pathway; S-methyl-5-thio-alpha-D-ribose 1-phosphate from S-methyl-5'-thioadenosine (hydrolase route): step 1/2. Its function is as follows. Catalyzes the irreversible cleavage of the glycosidic bond in both 5'-methylthioadenosine (MTA) and S-adenosylhomocysteine (SAH/AdoHcy) to adenine and the corresponding thioribose, 5'-methylthioribose and S-ribosylhomocysteine, respectively. Also cleaves 5'-deoxyadenosine, a toxic by-product of radical S-adenosylmethionine (SAM) enzymes, into 5-deoxyribose and adenine. This Pseudoalteromonas translucida (strain TAC 125) protein is 5'-methylthioadenosine/S-adenosylhomocysteine nucleosidase.